Here is a 319-residue protein sequence, read N- to C-terminus: Lipoyl synthase (319 aa).

Residues 1–28 (MVVLVDTVSSTPVRPRHPEKAARPDALS) form a disordered region. A compositionally biased stretch (basic and acidic residues) spans 16 to 28 (RHPEKAARPDALS). C61, C66, C72, C87, C91, C94, and S300 together coordinate [4Fe-4S] cluster. The region spanning 73–289 (WDKKHATFMI…AKTAYAKGFL (217 aa)) is the Radical SAM core domain.

It belongs to the radical SAM superfamily. Lipoyl synthase family. [4Fe-4S] cluster serves as cofactor.

It is found in the cytoplasm. It catalyses the reaction [[Fe-S] cluster scaffold protein carrying a second [4Fe-4S](2+) cluster] + N(6)-octanoyl-L-lysyl-[protein] + 2 oxidized [2Fe-2S]-[ferredoxin] + 2 S-adenosyl-L-methionine + 4 H(+) = [[Fe-S] cluster scaffold protein] + N(6)-[(R)-dihydrolipoyl]-L-lysyl-[protein] + 4 Fe(3+) + 2 hydrogen sulfide + 2 5'-deoxyadenosine + 2 L-methionine + 2 reduced [2Fe-2S]-[ferredoxin]. It functions in the pathway protein modification; protein lipoylation via endogenous pathway; protein N(6)-(lipoyl)lysine from octanoyl-[acyl-carrier-protein]: step 2/2. Catalyzes the radical-mediated insertion of two sulfur atoms into the C-6 and C-8 positions of the octanoyl moiety bound to the lipoyl domains of lipoate-dependent enzymes, thereby converting the octanoylated domains into lipoylated derivatives. This chain is Lipoyl synthase, found in Rhodopseudomonas palustris (strain HaA2).